A 198-amino-acid polypeptide reads, in one-letter code: Orotate phosphoribosyltransferase (198 aa).

5-phospho-alpha-D-ribose 1-diphosphate-binding positions include arginine 108, lysine 109, lysine 112, histidine 114, and 135–143 (EDVVTTGKS). Orotate contacts are provided by threonine 139 and arginine 167.

Belongs to the purine/pyrimidine phosphoribosyltransferase family. PyrE subfamily. Homodimer. Mg(2+) serves as cofactor.

The catalysed reaction is orotidine 5'-phosphate + diphosphate = orotate + 5-phospho-alpha-D-ribose 1-diphosphate. It participates in pyrimidine metabolism; UMP biosynthesis via de novo pathway; UMP from orotate: step 1/2. Its function is as follows. Catalyzes the transfer of a ribosyl phosphate group from 5-phosphoribose 1-diphosphate to orotate, leading to the formation of orotidine monophosphate (OMP). This is Orotate phosphoribosyltransferase from Synechocystis sp. (strain ATCC 27184 / PCC 6803 / Kazusa).